The primary structure comprises 339 residues: Type IV secretion system protein PtlH homolog (339 aa).

The protein belongs to the GSP E family.

This is Type IV secretion system protein PtlH homolog (ptlH) from Bordetella bronchiseptica (strain ATCC BAA-588 / NCTC 13252 / RB50) (Alcaligenes bronchisepticus).